We begin with the raw amino-acid sequence, 1190 residues long: Plakophilin-4 (1190 aa).

The segment at 1-32 is disordered; that stretch reads MPAPEQGSLVEEGQPQTHQEAVSTGPGMEPET. Residues 36–63 are a coiled coil; it reads TILASVKEQELQFQRLTRELEVERQIVA. The tract at residues 73-347 is disordered; the sequence is AESPSIASTS…KRSGMTAVPQ (275 aa). Residue S75 is modified to Phosphoserine. Residues 77 to 86 are compositionally biased toward polar residues; that stretch reads SIASTSSTEK. Residue T84 is modified to Phosphothreonine. A phosphoserine mark is found at S106, S132, S136, and S139. 3 stretches are compositionally biased toward polar residues: residues 138–156, 163–203, and 213–229; these read GSLG…SDSG, FHNS…QPSV, and SVPS…STGV. Residues S220, S230, and S235 each carry the phosphoserine modification. Over residues 230–241 the composition is skewed to low complexity; the sequence is SPSRGSLRTSLG. Polar residues predominate over residues 247-266; the sequence is PSVTDSRPLNPSAYSSSTLP. 2 positions are modified to omega-N-methylarginine: R253 and R269. Phosphoserine is present on residues S272, S280, S313, S326, and S336. The segment covering 289–323 has biased composition (polar residues); that stretch reads SVTSRQTSNPNGPVPQYQTTTRVGSPLTLTDAQTR. The segment covering 324-337 has biased composition (low complexity); that stretch reads VASPSQGQVGSSSP. Y371 is modified (phosphotyrosine). A phosphoserine mark is found at S391, S402, and S405. T411 bears the Phosphothreonine mark. The residue at position 414 (Y414) is a Phosphotyrosine. A phosphoserine mark is found at S421, S426, and S437. Residue Y477 is modified to Phosphotyrosine. A phosphoserine mark is found at S509, S511, and S514. 3 ARM repeats span residues 517–556, 559–598, and 603–643; these read KDPR…HLCF, NKVK…NLVF, and DENK…NLSS. The segment covering 772 to 781 has biased composition (basic and acidic residues); that stretch reads GKESPSKDSE. The disordered stretch occupies residues 772–809; that stretch reads GKESPSKDSEPSCWGKKKKKKKRTPQEDQWDGVGPIPG. A Phosphoserine modification is found at S775. An ARM 4 repeat occupies 861–900; sequence AYIRAAVRKEKGLPILVELLRMDNDRVVSSVATALRNMAL. Phosphothreonine is present on residues T1012 and T1016. Phosphoserine is present on residues S1044, S1090, S1099, and S1133.

Belongs to the beta-catenin family. As to quaternary structure, interacts (via the C-terminus) with FRMPD2 (via the PDZ 2 domain). Interacts with PDZD2. Interacts with RHOA; the interaction is detected at the midbody. Interacts with ECT2; the interaction is detected at the midbody. Interacts with CCDC85B.

The protein resides in the cell junction. It is found in the desmosome. It localises to the cytoplasm. The protein localises to the cytoskeleton. Its subcellular location is the spindle. The protein resides in the spindle pole. It is found in the midbody. It localises to the cell membrane. In terms of biological role, plays a role as a regulator of Rho activity during cytokinesis. May play a role in junctional plaques. This is Plakophilin-4 (Pkp4) from Mus musculus (Mouse).